Here is a 145-residue protein sequence, read N- to C-terminus: Ribosome maturation factor RimP (145 aa).

Belongs to the RimP family.

Its subcellular location is the cytoplasm. Functionally, required for maturation of 30S ribosomal subunits. The sequence is that of Ribosome maturation factor RimP from Borreliella afzelii (strain PKo) (Borrelia afzelii).